The primary structure comprises 139 residues: D-ribose pyranase (139 aa).

H20 acts as the Proton donor in catalysis. Substrate is bound by residues D28, H106, and 128–130; that span reads YAN.

The protein belongs to the RbsD / FucU family. RbsD subfamily. In terms of assembly, homodecamer.

The protein resides in the cytoplasm. It catalyses the reaction beta-D-ribopyranose = beta-D-ribofuranose. The protein operates within carbohydrate metabolism; D-ribose degradation; D-ribose 5-phosphate from beta-D-ribopyranose: step 1/2. In terms of biological role, catalyzes the interconversion of beta-pyran and beta-furan forms of D-ribose. This Maridesulfovibrio salexigens (strain ATCC 14822 / DSM 2638 / NCIMB 8403 / VKM B-1763) (Desulfovibrio salexigens) protein is D-ribose pyranase.